The sequence spans 739 residues: Catalase-peroxidase (739 aa).

The segment at residues 99–227 (WHSAGTYRMG…LAAVQMGLIY (129 aa)) is a cross-link (tryptophyl-tyrosyl-methioninium (Trp-Tyr) (with M-253)). The active-site Proton acceptor is His-100. Residues 227 to 253 (YVNPEGPDGNPDPVASGRDVRETFARM) constitute a cross-link (tryptophyl-tyrosyl-methioninium (Tyr-Met) (with W-99)). Position 268 (His-268) interacts with heme b.

The protein belongs to the peroxidase family. Peroxidase/catalase subfamily. As to quaternary structure, homodimer or homotetramer. Requires heme b as cofactor. Post-translationally, formation of the three residue Trp-Tyr-Met cross-link is important for the catalase, but not the peroxidase activity of the enzyme.

The catalysed reaction is H2O2 + AH2 = A + 2 H2O. The enzyme catalyses 2 H2O2 = O2 + 2 H2O. In terms of biological role, bifunctional enzyme with both catalase and broad-spectrum peroxidase activity. The polypeptide is Catalase-peroxidase (Syntrophotalea carbinolica (strain DSM 2380 / NBRC 103641 / GraBd1) (Pelobacter carbinolicus)).